The sequence spans 66 residues: Large ribosomal subunit protein bL28 (66 aa).

A disordered region spans residues 1–26 (MAKDAITGARTRFGNQRSHALNSSRR). The segment covering 13 to 25 (FGNQRSHALNSSR) has biased composition (polar residues).

Belongs to the bacterial ribosomal protein bL28 family.

This Leuconostoc mesenteroides subsp. mesenteroides (strain ATCC 8293 / DSM 20343 / BCRC 11652 / CCM 1803 / JCM 6124 / NCDO 523 / NBRC 100496 / NCIMB 8023 / NCTC 12954 / NRRL B-1118 / 37Y) protein is Large ribosomal subunit protein bL28.